Reading from the N-terminus, the 2116-residue chain is Myosin-2 heavy chain (2116 aa).

A Myosin N-terminal SH3-like domain is found at 30 to 82 (SDKRYIWYNPDPKERDSYECGEIVSETSDSFTFKTVDGQDRQVKKDDANQRNP). The region spanning 86 to 759 (DGVEDMSELS…QLARIEEARE (674 aa)) is the Myosin motor domain. Lysine 130 carries the post-translational modification N6,N6-dimethyllysine. 179-186 (GESGAGKT) is a binding site for ATP. Actin-binding stretches follow at residues 638–660 (LASL…IPNN) and 738–752 (RFGI…GQLA). The 30-residue stretch at 762–791 (ISEIIKAIQAATRGWIARKVYKQAREHTVA) folds into the IQ domain. Residues 817–2116 (ARPLLKRRNF…MADFFGGFKA (1300 aa)) are a coiled coil. 6 disordered regions span residues 1295-1314 (VNEQ…KRKV), 1363-1399 (DKSV…SKKK), 1415-1444 (TAKK…DAKN), 1711-1731 (VRDQ…SKRR), 1771-1791 (LEDE…LESE), and 1805-1844 (NRSR…AAKL). Basic and acidic residues-rich tracts occupy residues 1375–1399 (KNEE…SKKK), 1415–1443 (TAKK…DDAK), and 1722–1731 (RSELEDSKRR). A compositionally biased stretch (basic and acidic residues) spans 1805–1832 (NRSRAEKDRKKYEKDLKDTKYKLNDEAA). Phosphothreonine; by MHCK occurs at positions 1823, 1833, and 2029.

The protein belongs to the TRAFAC class myosin-kinesin ATPase superfamily. Myosin family. In terms of assembly, myosin-2 heavy chain is two-headed. It self-assembles into filaments. Hexamer of 2 heavy chain subunits (MHC), 2 alkali light chain subunits (MLC) and 2 regulatory light chain subunits (MLC-2). Associates with elmoA. Post-translationally, phosphorylation inhibits thick filament formation and reduces the actin-activated ATPase activity.

The protein resides in the cytoplasm. It is found in the cell cortex. Its function is as follows. Myosin is a protein that binds to actin and has ATPase activity that is activated by actin. The protein is Myosin-2 heavy chain (mhcA) of Dictyostelium discoideum (Social amoeba).